A 593-amino-acid chain; its full sequence is Isocitrate dehydrogenase kinase/phosphatase (593 aa).

ATP is bound by residues 324–330 and Lys345; that span reads APGIRGL. Asp380 is an active-site residue.

It belongs to the AceK family.

Its subcellular location is the cytoplasm. It catalyses the reaction L-seryl-[isocitrate dehydrogenase] + ATP = O-phospho-L-seryl-[isocitrate dehydrogenase] + ADP + H(+). Its function is as follows. Bifunctional enzyme which can phosphorylate or dephosphorylate isocitrate dehydrogenase (IDH) on a specific serine residue. This is a regulatory mechanism which enables bacteria to bypass the Krebs cycle via the glyoxylate shunt in response to the source of carbon. When bacteria are grown on glucose, IDH is fully active and unphosphorylated, but when grown on acetate or ethanol, the activity of IDH declines drastically concomitant with its phosphorylation. The chain is Isocitrate dehydrogenase kinase/phosphatase from Dechloromonas aromatica (strain RCB).